The sequence spans 272 residues: 2-amino-3,7-dideoxy-D-threo-hept-6-ulosonate synthase (272 aa).

Aspartate 33 (proton acceptor) is an active-site residue. Residues 33–37 (DHGVS) and 153–155 (YPR) each bind 1-deoxy-D-threo-hexo-2,5-diulose 6-phosphate. Residue tyrosine 153 is the Proton donor of the active site. Lysine 184 (schiff-base intermediate with substrate) is an active-site residue. 1-deoxy-D-threo-hexo-2,5-diulose 6-phosphate contacts are provided by residues 209–210 (GG) and 237–238 (GR).

The protein belongs to the DeoC/FbaB aldolase family. ADHS subfamily. In terms of assembly, homodecamer.

It catalyses the reaction 1-deoxy-D-threo-hexo-2,5-diulose 6-phosphate + L-aspartate 4-semialdehyde = 2,3-dioxopropyl phosphate + 2-amino-2,3,7-trideoxy-D-lyxo-hept-6-ulosonate. Its function is as follows. Catalyzes a transaldol reaction between 6-deoxy-5-ketofructose 1-phosphate (DKFP) and L-aspartate semialdehyde (ASA) with an elimination of hydroxypyruvaldehyde phosphate to yield 2-amino-3,7-dideoxy-D-threo-hept-6-ulosonate (ADH). Plays a key role in an alternative pathway of the biosynthesis of 3-dehydroquinate (DHQ), which is involved in the canonical pathway for the biosynthesis of aromatic amino acids and which is also a precursor for the biosynthesis of p-aminobenzoic acid (PABA) in M.maripaludis. Does not possess fructose-bisphosphate (FBP) aldolase activity. This is 2-amino-3,7-dideoxy-D-threo-hept-6-ulosonate synthase from Methanococcus maripaludis (strain DSM 14266 / JCM 13030 / NBRC 101832 / S2 / LL).